Reading from the N-terminus, the 78-residue chain is Large ribosomal subunit protein bL28 (78 aa).

The protein belongs to the bacterial ribosomal protein bL28 family.

The sequence is that of Large ribosomal subunit protein bL28 from Klebsiella pneumoniae (strain 342).